A 338-amino-acid chain; its full sequence is Fructose-1,6-bisphosphatase class 1 (338 aa).

Residues E92, D113, L115, and D116 each contribute to the Mg(2+) site. Residues 116-119, N208, and K274 each bind substrate; that span reads DGSS. E280 serves as a coordination point for Mg(2+).

Belongs to the FBPase class 1 family. In terms of assembly, homotetramer. It depends on Mg(2+) as a cofactor.

It localises to the cytoplasm. It catalyses the reaction beta-D-fructose 1,6-bisphosphate + H2O = beta-D-fructose 6-phosphate + phosphate. It functions in the pathway carbohydrate biosynthesis; gluconeogenesis. This is Fructose-1,6-bisphosphatase class 1 from Paramagnetospirillum magneticum (strain ATCC 700264 / AMB-1) (Magnetospirillum magneticum).